The sequence spans 230 residues: dITP/XTP pyrophosphatase (230 aa).

7–12 (STNPGK) provides a ligand contact to substrate. Mg(2+) contacts are provided by Glu41 and Asp70. The Proton acceptor role is filled by Asp70. Residues Ser71, 181–184 (FGYD), Lys205, and 210–211 (HR) contribute to the substrate site.

The protein belongs to the HAM1 NTPase family. In terms of assembly, homodimer. Mg(2+) is required as a cofactor.

The catalysed reaction is XTP + H2O = XMP + diphosphate + H(+). It carries out the reaction dITP + H2O = dIMP + diphosphate + H(+). The enzyme catalyses ITP + H2O = IMP + diphosphate + H(+). In terms of biological role, pyrophosphatase that catalyzes the hydrolysis of nucleoside triphosphates to their monophosphate derivatives, with a high preference for the non-canonical purine nucleotides XTP (xanthosine triphosphate), dITP (deoxyinosine triphosphate) and ITP. Seems to function as a house-cleaning enzyme that removes non-canonical purine nucleotides from the nucleotide pool, thus preventing their incorporation into DNA/RNA and avoiding chromosomal lesions. This Anaeromyxobacter sp. (strain Fw109-5) protein is dITP/XTP pyrophosphatase.